The sequence spans 211 residues: Small ribosomal subunit protein uS3 (211 aa).

In terms of domain architecture, KH type-2 spans 38 to 106 (LRSFVKKTFH…EVELHIVEVK (69 aa)).

This sequence belongs to the universal ribosomal protein uS3 family. In terms of assembly, part of the 30S ribosomal subunit. Forms a tight complex with proteins S10 and S14.

Binds the lower part of the 30S subunit head. Binds mRNA in the 70S ribosome, positioning it for translation. The polypeptide is Small ribosomal subunit protein uS3 (Anaplasma phagocytophilum (strain HZ)).